Here is a 333-residue protein sequence, read N- to C-terminus: Tetraacyldisaccharide 4'-kinase (333 aa).

Residue 55–62 (TAGGNGKT) coordinates ATP.

This sequence belongs to the LpxK family.

The enzyme catalyses a lipid A disaccharide + ATP = a lipid IVA + ADP + H(+). It participates in glycolipid biosynthesis; lipid IV(A) biosynthesis; lipid IV(A) from (3R)-3-hydroxytetradecanoyl-[acyl-carrier-protein] and UDP-N-acetyl-alpha-D-glucosamine: step 6/6. Functionally, transfers the gamma-phosphate of ATP to the 4'-position of a tetraacyldisaccharide 1-phosphate intermediate (termed DS-1-P) to form tetraacyldisaccharide 1,4'-bis-phosphate (lipid IVA). The protein is Tetraacyldisaccharide 4'-kinase of Proteus mirabilis (strain HI4320).